We begin with the raw amino-acid sequence, 149 residues long: MKSTLRISLKAGERIFINGAVLRVDRKVALEFLNDVTFLLENHVLQPEGATTPLRQLYFIAQMILINPEGKDHSTAMFRKSITMLLSCFKNEEILAELKRIDALVSTGRAFDALKAIRGLYAIEDNILNNHEMPPTMVEQIRREIAPWR.

It belongs to the FlbT family.

Functionally, has a post-transcriptional repressor function in flagellum biogenesis. Associates with the 5'-UTR of fljK mRNA and promotes its degradation. The sequence is that of Probable flagellum biosynthesis repressor protein FlbT from Rhizobium leguminosarum bv. trifolii (strain WSM2304).